Consider the following 1411-residue polypeptide: Protein three rows (1411 aa).

Positions 1065-1071 (VEPIRKQ) are separase cleavage-site. Disordered stretches follow at residues 1221–1240 (LEPP…NISP), 1268–1301 (VRPA…KSPK), and 1330–1411 (AKST…RHRN). Low complexity-rich tracts occupy residues 1270-1289 (PASS…NASS) and 1386-1398 (TAEQ…TATP).

As to quaternary structure, interacts with pim and Sse. Cleavage of thr contributes to inactivation of Sse.

The protein resides in the cytoplasm. Functionally, required specifically for chromosome disjunction during all mitoses; maternally provided protein is sufficient until mitosis 14 then zygotic protein is required. Involved in formation and/or maintenance of epithelial structures: bud extension during Malpighian tubule development, and foregut and hindgut morphogenesis. In Drosophila virilis (Fruit fly), this protein is Protein three rows (thr).